The chain runs to 247 residues: tRNA pseudouridine synthase A (247 aa).

Asp-57 (nucleophile) is an active-site residue. A substrate-binding site is contributed by Tyr-115.

The protein belongs to the tRNA pseudouridine synthase TruA family. Homodimer.

It catalyses the reaction uridine(38/39/40) in tRNA = pseudouridine(38/39/40) in tRNA. Formation of pseudouridine at positions 38, 39 and 40 in the anticodon stem and loop of transfer RNAs. The sequence is that of tRNA pseudouridine synthase A from Chlorobaculum tepidum (strain ATCC 49652 / DSM 12025 / NBRC 103806 / TLS) (Chlorobium tepidum).